The following is a 345-amino-acid chain: Dihydroorotate dehydrogenase (quinone) (345 aa).

Residues 65–69 and Thr89 each bind FMN; that span reads AGLDK. Lys69 is a binding site for substrate. Substrate is bound at residue 114-118; the sequence is NRMGF. Asn142 and Asn175 together coordinate FMN. Asn175 is a binding site for substrate. Ser178 acts as the Nucleophile in catalysis. Asn180 serves as a coordination point for substrate. The FMN site is built by Lys220 and Thr248. A substrate-binding site is contributed by 249-250; it reads NT. Residues Gly271, Gly300, and 321-322 each bind FMN; that span reads YT.

This sequence belongs to the dihydroorotate dehydrogenase family. Type 2 subfamily. In terms of assembly, monomer. The cofactor is FMN.

The protein localises to the cell membrane. The catalysed reaction is (S)-dihydroorotate + a quinone = orotate + a quinol. It participates in pyrimidine metabolism; UMP biosynthesis via de novo pathway; orotate from (S)-dihydroorotate (quinone route): step 1/1. Its function is as follows. Catalyzes the conversion of dihydroorotate to orotate with quinone as electron acceptor. In Burkholderia ambifaria (strain ATCC BAA-244 / DSM 16087 / CCUG 44356 / LMG 19182 / AMMD) (Burkholderia cepacia (strain AMMD)), this protein is Dihydroorotate dehydrogenase (quinone).